A 110-amino-acid polypeptide reads, in one-letter code: Large ribosomal subunit protein uL22 (110 aa).

The protein belongs to the universal ribosomal protein uL22 family. As to quaternary structure, part of the 50S ribosomal subunit.

Functionally, this protein binds specifically to 23S rRNA; its binding is stimulated by other ribosomal proteins, e.g. L4, L17, and L20. It is important during the early stages of 50S assembly. It makes multiple contacts with different domains of the 23S rRNA in the assembled 50S subunit and ribosome. In terms of biological role, the globular domain of the protein is located near the polypeptide exit tunnel on the outside of the subunit, while an extended beta-hairpin is found that lines the wall of the exit tunnel in the center of the 70S ribosome. In Hahella chejuensis (strain KCTC 2396), this protein is Large ribosomal subunit protein uL22.